The chain runs to 137 residues: 2-iminobutanoate/2-iminopropanoate deaminase (137 aa).

S2 carries the N-acetylserine modification. N6-succinyllysine is present on residues K13 and K67. T74 carries the phosphothreonine modification. S136 is modified (phosphoserine).

This sequence belongs to the RutC family. In terms of assembly, homotrimer. Interacts with YTHDF2.

It localises to the cytoplasm. The protein localises to the nucleus. The protein resides in the peroxisome. Its subcellular location is the mitochondrion. It carries out the reaction 2-iminobutanoate + H2O = 2-oxobutanoate + NH4(+). The enzyme catalyses 2-iminopropanoate + H2O = pyruvate + NH4(+). In terms of biological role, catalyzes the hydrolytic deamination of enamine/imine intermediates that form during the course of normal metabolism. May facilitate the release of ammonia from these potentially toxic reactive metabolites, reducing their impact on cellular components. It may act on enamine/imine intermediates formed by several types of pyridoxal-5'-phosphate-dependent dehydratases including L-threonine dehydratase. Functionally, also promotes endoribonucleolytic cleavage of some transcripts by promoting recruitment of the ribonuclease P/MRP complex. Acts by bridging YTHDF2 and the ribonuclease P/MRP complex. RIDA/HRSP12 binds to N6-methyladenosine (m6A)-containing mRNAs containing a 5'-GGUUC-3' motif: cooperative binding of RIDA/HRSP12 and YTHDF2 to such transcripts lead to recruitment of the ribonuclease P/MRP complex and subsequent endoribonucleolytic cleavage. This chain is 2-iminobutanoate/2-iminopropanoate deaminase, found in Bos taurus (Bovine).